A 296-amino-acid polypeptide reads, in one-letter code: MKNITFKEKINLSNYTTIKVGGFAEYFSKPNNTDEFINLINWASLNNQKCRIIGAGSNLLINNIFLKGLTICTKKMRSIKIESHSGIVEVEAGVMLPTMSNILAKKGLQGGEWTVGIPGTVGGSICMNAGSKQLSLANNLLSVRVIDTKTLKISEIEKKDINFQYRFSPFQQNNLMIISAKLLFEPKGNIEQLLETTQKNLKKKTDTQPYHLPSFGSVFKNPTNNYAGKLIEELGLKGFKIGGAEISTMHGNFIVNNSFANSKDILDLITVIQQKVLQKKGIFLEPEVRMIGFDYP.

In terms of domain architecture, FAD-binding PCMH-type spans 19 to 203 (KVGGFAEYFS…LETTQKNLKK (185 aa)). Arginine 166 is an active-site residue. Residue serine 217 is the Proton donor of the active site. The active site involves glutamate 287.

The protein belongs to the MurB family. The cofactor is FAD.

The protein resides in the cytoplasm. The catalysed reaction is UDP-N-acetyl-alpha-D-muramate + NADP(+) = UDP-N-acetyl-3-O-(1-carboxyvinyl)-alpha-D-glucosamine + NADPH + H(+). Its pathway is cell wall biogenesis; peptidoglycan biosynthesis. In terms of biological role, cell wall formation. The polypeptide is UDP-N-acetylenolpyruvoylglucosamine reductase (Prochlorococcus marinus subsp. pastoris (strain CCMP1986 / NIES-2087 / MED4)).